We begin with the raw amino-acid sequence, 202 residues long: Imidazoleglycerol-phosphate dehydratase (202 aa).

The protein belongs to the imidazoleglycerol-phosphate dehydratase family.

Its subcellular location is the cytoplasm. The enzyme catalyses D-erythro-1-(imidazol-4-yl)glycerol 3-phosphate = 3-(imidazol-4-yl)-2-oxopropyl phosphate + H2O. It participates in amino-acid biosynthesis; L-histidine biosynthesis; L-histidine from 5-phospho-alpha-D-ribose 1-diphosphate: step 6/9. In Rhizobium meliloti (strain 1021) (Ensifer meliloti), this protein is Imidazoleglycerol-phosphate dehydratase.